The primary structure comprises 79 residues: MPNPGNVIGGHKAALHNPNVSEETKQREKEYLEEHEGEVGEEHQKNTGNVRGGYKAAMHNPNVSGEAKQRAQEELENLE.

The segment at 1–79 (MPNPGNVIGG…RAQEELENLE (79 aa)) is disordered. Residues 22-45 (EETKQREKEYLEEHEGEVGEEHQK) are compositionally biased toward basic and acidic residues.

The protein belongs to the UPF0654 (con-6) family.

The chain is UPF0654 protein C11D3.01c from Schizosaccharomyces pombe (strain 972 / ATCC 24843) (Fission yeast).